We begin with the raw amino-acid sequence, 222 residues long: Putative N-acetylmannosamine-6-phosphate 2-epimerase (222 aa).

This sequence belongs to the NanE family.

The catalysed reaction is an N-acyl-D-glucosamine 6-phosphate = an N-acyl-D-mannosamine 6-phosphate. Its pathway is amino-sugar metabolism; N-acetylneuraminate degradation; D-fructose 6-phosphate from N-acetylneuraminate: step 3/5. Functionally, converts N-acetylmannosamine-6-phosphate (ManNAc-6-P) to N-acetylglucosamine-6-phosphate (GlcNAc-6-P). The sequence is that of Putative N-acetylmannosamine-6-phosphate 2-epimerase from Staphylococcus saprophyticus subsp. saprophyticus (strain ATCC 15305 / DSM 20229 / NCIMB 8711 / NCTC 7292 / S-41).